The primary structure comprises 356 residues: Cell division protein ZipA (356 aa).

Residues 1-6 are Periplasmic-facing; sequence MEDLQL. A helical membrane pass occupies residues 7–27; the sequence is VLFVLGAIAIVAVLVHGFWSI. The Cytoplasmic portion of the chain corresponds to 28–356; that stretch reads RRQQPKSLKD…DYLHRIRANA (329 aa). Residues 132–155 are disordered; sequence PAQPDFSLQPPVAKEQHRGPKVSR.

Belongs to the ZipA family. Interacts with FtsZ via their C-terminal domains.

It is found in the cell inner membrane. In terms of biological role, essential cell division protein that stabilizes the FtsZ protofilaments by cross-linking them and that serves as a cytoplasmic membrane anchor for the Z ring. Also required for the recruitment to the septal ring of downstream cell division proteins. In Shewanella baltica (strain OS185), this protein is Cell division protein ZipA.